Reading from the N-terminus, the 131-residue chain is Large ribosomal subunit protein bL17 (131 aa).

It belongs to the bacterial ribosomal protein bL17 family. As to quaternary structure, part of the 50S ribosomal subunit. Contacts protein L32.

This is Large ribosomal subunit protein bL17 from Oenococcus oeni (strain ATCC BAA-331 / PSU-1).